Here is a 232-residue protein sequence, read N- to C-terminus: 5'-methylthioadenosine/S-adenosylhomocysteine nucleosidase (232 aa).

The Proton acceptor role is filled by glutamate 12. Substrate is bound by residues glycine 78, isoleucine 152, and 173-174; that span reads ME. The active-site Proton donor is the aspartate 197.

This sequence belongs to the PNP/UDP phosphorylase family. MtnN subfamily. Homodimer.

It catalyses the reaction S-adenosyl-L-homocysteine + H2O = S-(5-deoxy-D-ribos-5-yl)-L-homocysteine + adenine. It carries out the reaction S-methyl-5'-thioadenosine + H2O = 5-(methylsulfanyl)-D-ribose + adenine. The catalysed reaction is 5'-deoxyadenosine + H2O = 5-deoxy-D-ribose + adenine. Its pathway is amino-acid biosynthesis; L-methionine biosynthesis via salvage pathway; S-methyl-5-thio-alpha-D-ribose 1-phosphate from S-methyl-5'-thioadenosine (hydrolase route): step 1/2. Functionally, catalyzes the irreversible cleavage of the glycosidic bond in both 5'-methylthioadenosine (MTA) and S-adenosylhomocysteine (SAH/AdoHcy) to adenine and the corresponding thioribose, 5'-methylthioribose and S-ribosylhomocysteine, respectively. Also cleaves 5'-deoxyadenosine, a toxic by-product of radical S-adenosylmethionine (SAM) enzymes, into 5-deoxyribose and adenine. Thus, is required for in vivo function of the radical SAM enzymes biotin synthase and lipoic acid synthase, that are inhibited by 5'-deoxyadenosine accumulation. This chain is 5'-methylthioadenosine/S-adenosylhomocysteine nucleosidase, found in Salmonella enteritidis PT4 (strain P125109).